Reading from the N-terminus, the 102-residue chain is Protein C4 (102 aa).

Positions M1–T27 are enriched in low complexity. Disordered regions lie at residues M1–H35 and R47–R86.

This sequence belongs to the geminiviridae protein AC4/C4 family.

Pathogenicity determinant. May act as a suppressor of RNA-mediated gene silencing, also known as post-transcriptional gene silencing (PTGS), a mechanism of plant viral defense that limits the accumulation of viral RNAs. The sequence is that of Protein C4 from Cynanchum acutum (Little mallow).